Reading from the N-terminus, the 92-residue chain is Small ribosomal subunit protein uS19c (92 aa).

This sequence belongs to the universal ribosomal protein uS19 family.

It is found in the plastid. Its subcellular location is the chloroplast. Protein S19 forms a complex with S13 that binds strongly to the 16S ribosomal RNA. The polypeptide is Small ribosomal subunit protein uS19c (Eucalyptus globulus subsp. globulus (Tasmanian blue gum)).